The following is a 236-amino-acid chain: Purine nucleoside phosphorylase DeoD-type (236 aa).

Histidine 5 provides a ligand contact to a purine D-ribonucleoside. Phosphate contacts are provided by residues glycine 21, arginine 25, arginine 44, and arginine 88 to threonine 91. Residues glutamate 180–glutamate 182 and serine 204–aspartate 205 each bind a purine D-ribonucleoside. Aspartate 205 functions as the Proton donor in the catalytic mechanism.

The protein belongs to the PNP/UDP phosphorylase family. In terms of assembly, homohexamer; trimer of homodimers.

The catalysed reaction is a purine D-ribonucleoside + phosphate = a purine nucleobase + alpha-D-ribose 1-phosphate. It carries out the reaction a purine 2'-deoxy-D-ribonucleoside + phosphate = a purine nucleobase + 2-deoxy-alpha-D-ribose 1-phosphate. Catalyzes the reversible phosphorolytic breakdown of the N-glycosidic bond in the beta-(deoxy)ribonucleoside molecules, with the formation of the corresponding free purine bases and pentose-1-phosphate. This chain is Purine nucleoside phosphorylase DeoD-type, found in Shewanella sp. (strain MR-4).